A 208-amino-acid chain; its full sequence is N-(5'-phosphoribosyl)anthranilate isomerase (208 aa).

Belongs to the TrpF family.

The enzyme catalyses N-(5-phospho-beta-D-ribosyl)anthranilate = 1-(2-carboxyphenylamino)-1-deoxy-D-ribulose 5-phosphate. The protein operates within amino-acid biosynthesis; L-tryptophan biosynthesis; L-tryptophan from chorismate: step 3/5. The sequence is that of N-(5'-phosphoribosyl)anthranilate isomerase from Lactiplantibacillus plantarum (strain ATCC BAA-793 / NCIMB 8826 / WCFS1) (Lactobacillus plantarum).